The primary structure comprises 501 residues: Probable histidine--tRNA ligase, mitochondrial (501 aa).

The interval 32–54 (TNSNNNNNNNNNNNNNNNNNKNI) is disordered. Positions 33-54 (NSNNNNNNNNNNNNNNNNNKNI) are enriched in low complexity.

It belongs to the class-II aminoacyl-tRNA synthetase family.

The protein localises to the mitochondrion matrix. It carries out the reaction tRNA(His) + L-histidine + ATP = L-histidyl-tRNA(His) + AMP + diphosphate + H(+). The protein is Probable histidine--tRNA ligase, mitochondrial (mhisS) of Dictyostelium discoideum (Social amoeba).